Reading from the N-terminus, the 240-residue chain is Proteasome subunit beta type-1 (240 aa).

Met-1 bears the N-acetylmethionine mark. Residues 1-27 (MLSTAAYRDVERELGMGPHGSAGPVQL) constitute a propeptide that is removed on maturation. O-linked (GlcNAc) serine glycosylation is present at Ser-57. Residues Ser-61 and Ser-67 each carry the phosphoserine modification. At Tyr-149 the chain carries Phosphotyrosine. Ser-161 bears the Phosphoserine mark. The residue at position 203 (Lys-203) is an N6-acetyllysine. The O-linked (GlcNAc) serine glycan is linked to Ser-208.

This sequence belongs to the peptidase T1B family. In terms of assembly, the 26S proteasome consists of a 20S proteasome core and two 19S regulatory subunits. The 20S proteasome core is a barrel-shaped complex made of 28 subunits that are arranged in four stacked rings. The two outer rings are each formed by seven alpha subunits, and the two inner rings are formed by seven beta subunits. The proteolytic activity is exerted by three beta-subunits PSMB5, PSMB6 and PSMB7. Interacts with SERPINB2. Interacts with RFPL4A. In terms of tissue distribution, detected in liver (at protein level).

Its subcellular location is the cytoplasm. It localises to the nucleus. Non-catalytic component of the 20S core proteasome complex involved in the proteolytic degradation of most intracellular proteins. This complex plays numerous essential roles within the cell by associating with different regulatory particles. Associated with two 19S regulatory particles, forms the 26S proteasome and thus participates in the ATP-dependent degradation of ubiquitinated proteins. The 26S proteasome plays a key role in the maintenance of protein homeostasis by removing misfolded or damaged proteins that could impair cellular functions, and by removing proteins whose functions are no longer required. Associated with the PA200 or PA28, the 20S proteasome mediates ubiquitin-independent protein degradation. This type of proteolysis is required in several pathways including spermatogenesis (20S-PA200 complex) or generation of a subset of MHC class I-presented antigenic peptides (20S-PA28 complex). The sequence is that of Proteasome subunit beta type-1 (Psmb1) from Mus musculus (Mouse).